The following is a 715-amino-acid chain: Nucleolar complex protein 2 homolog (715 aa).

3 disordered regions span residues 17–71 (SKRI…HKLD), 85–132 (FLQQ…DKTK), and 638–715 (ERSA…SDED). Acidic residues predominate over residues 89–128 (EDADLLNMEDDGDDDEDDDEDDEDEEEEESDDDEDDEEDD). Positions 638-660 (ERSAVENSKKDDKKKKKEEEAAA) are enriched in basic and acidic residues.

It belongs to the NOC2 family.

The protein localises to the nucleus. Functionally, required for normal somatic gonad development and for regulation of germline development and proliferation. The polypeptide is Nucleolar complex protein 2 homolog (pro-2) (Caenorhabditis elegans).